Consider the following 3779-residue polypeptide: Protein DDB_G0268328 (3779 aa).

12 disordered regions span residues 24-56, 1001-1028, 1137-1165, 1513-1538, 1656-1690, 2027-2054, 2144-2184, 2280-2325, 2508-2527, 2720-2748, 2975-3030, and 3427-3450; these read RQIK…KDGS, HEDE…DDDD, QDST…QQQQ, PTNS…SLLS, ETTV…NNKE, SNSS…DSNN, NNNN…NNSS, ISTT…NEQQ, QINN…REEG, DGNN…NDSS, ESND…DSIK, and QSNT…SGKL. Composition is skewed to low complexity over residues 26–56, 1011–1020, 1149–1165, and 1515–1538; these read IKSQ…KDGS, DNSNNSNSQD, YYHQ…QQQQ, and NSIY…SLLS. A compositionally biased stretch (basic and acidic residues) spans 1656–1671; sequence ETTVLEKETKETKDNN. Residues 1672–1687 are compositionally biased toward low complexity; the sequence is LENNNNNTNNSNNNNN. Composition is skewed to low complexity over residues 2144 to 2182 and 2285 to 2322; these read NNNN…NNNN. 2 stretches are compositionally biased toward low complexity: residues 2722–2745 and 3015–3030; these read NNNN…QNNN and SVNN…DSIK. Over residues 3433-3446 the composition is skewed to gly residues; sequence GTGGGGGNGGGNNG.

This Dictyostelium discoideum (Social amoeba) protein is Protein DDB_G0268328.